We begin with the raw amino-acid sequence, 220 residues long: Aspartic protease inhibitor 4 (220 aa).

The N-terminal stretch at 1–23 (MMKCLFLLCLCLLPILVFSSTFT) is a signal peptide. Residues 24–32 (SQNPINLPS) constitute a propeptide that is removed on maturation. A Vacuolar targeting signal motif is present at residues 26-31 (NPINLP). A glycan (N-linked (GlcNAc...) asparagine) is linked at Asn-51. Cystine bridges form between Cys-80–Cys-125 and Cys-174–Cys-185.

Belongs to the protease inhibitor I3 (leguminous Kunitz-type inhibitor) family. In terms of tissue distribution, tubers.

The protein localises to the vacuole. Functionally, inhibits tightly cathepsin D (aspartic protease) and weakly trypsin (serine protease). May protect the plant by inhibiting proteases of invading organisms. The chain is Aspartic protease inhibitor 4 from Solanum tuberosum (Potato).